We begin with the raw amino-acid sequence, 367 residues long: Protein NDRG4-B (367 aa).

Basic and acidic residues predominate over residues 1 to 12; that stretch reads MSELRFPEEKPL. Disordered regions lie at residues 1 to 21 and 333 to 367; these read MSEL…TEME and LTSA…EVSC. Over residues 347 to 367 the composition is skewed to polar residues; the sequence is CTQSESSDGIGQINHTMEVSC.

The protein belongs to the NDRG family.

The protein localises to the cytoplasm. Its subcellular location is the cytosol. In terms of biological role, contributes to the maintenance of intracerebral BDNF levels within the normal range. May enhance growth factor-induced ERK1 and ERK2 phosphorylation. May attenuate growth factor-promoted ELK1 phosphorylation in a microtubule-dependent manner. The sequence is that of Protein NDRG4-B (ndrg4-b) from Xenopus laevis (African clawed frog).